Here is a 520-residue protein sequence, read N- to C-terminus: Cytochrome P450 monooxygenase TRI4 (520 aa).

A helical transmembrane segment spans residues 10–30 (LVNIPISHAVGVVAASTVIYF). A glycan (N-linked (GlcNAc...) asparagine) is linked at Asn-447. Residue Cys-455 participates in heme binding.

This sequence belongs to the cytochrome P450 family. It depends on heme as a cofactor.

It is found in the membrane. Its pathway is sesquiterpene biosynthesis; trichothecene biosynthesis. In terms of biological role, cytochrome P450 monooxygenase; part of the core gene cluster that mediates the biosynthesis of trichothecenes, a very large family of chemically related bicyclic sesquiterpene compounds acting as mycotoxins, including T2-toxin. The biosynthesis of trichothecenes begins with the cyclization of farnesyl diphosphate to trichodiene and is catalyzed by the trichodiene synthase TRI5. Trichodiene undergoes a series of oxygenations catalyzed by the cytochrome P450 monooxygenase TRI4. TRI4 controls the addition of four oxygens at C-2, C-3, C-11, and the C-12, C-13-epoxide to form the intermediate isotrichotriol. Isotrichotriol then undergoes a non-enzymatic isomerization and cyclization to form isotrichodermol. During this process, the oxygen at the C-2 position becomes the pyran ring oxygen and the hydroxyl group at C-11 is lost. More complex type A trichothecenes are built by modifying isotrichodermol through a series of paired hydroxylation and acetylation or acylation steps. Isotrichodermol is converted to isotrichodermin by the acetyltransferase TRI101. TRI101 encodes a C-3 transacetylase that acts as a self-protection or resistance factor during biosynthesis and that the presence of a free C-3 hydroxyl group is a key component of Fusarium trichothecene phytotoxicity. A second hydroxyl group is added to C-15 by the trichothecene C-15 hydroxylase TRI11, producing 15-decalonectrin, which is then acetylated by TRI3, producing calonectrin. A third hydroxyl group is added at C-4 by the cytochrome P450 monooxygenase TRI13, converting calonectrin to 3,15-diacetoxyspirpenol, which is subsequently acetylated by the acetyltransferase TRI7. A fourth hydroxyl group is added to C-8 by the cytochrome P450 monooxygenase TRI1, followed by the addition of an isovaleryl moiety by TRI16. Finally, the acetyl group is removed from the C-3 position by the trichothecene C-3 esterase TRI8 to produce T-2 toxin. The chain is Cytochrome P450 monooxygenase TRI4 from Fusarium sporotrichioides.